An 806-amino-acid polypeptide reads, in one-letter code: Acetyl-CoA decarbonylase/synthase complex subunit alpha 1 (806 aa).

Positions 73, 76, 77, 79, 84, and 94 each coordinate [4Fe-4S] cluster. His-117 provides a ligand contact to CO. [Ni-4Fe-4S] cluster contacts are provided by His-250, Cys-278, and Cys-323. 4Fe-4S ferredoxin-type domains lie at 407-436 and 445-475; these read DEQM…IPEA and YSYL…LSVI. [4Fe-4S] cluster contacts are provided by Cys-417, Cys-420, Cys-423, Cys-427, Cys-455, Cys-458, Cys-461, and Cys-465. 3 residues coordinate [Ni-4Fe-4S] cluster: Cys-523, Cys-552, and Cys-587.

It belongs to the Ni-containing carbon monoxide dehydrogenase family. As to quaternary structure, heterotetramer of two alpha and two epsilon subunits. The ACDS complex is made up of alpha, epsilon, beta, gamma and delta subunits with a probable stoichiometry of (alpha(2)epsilon(2))(4)-beta(8)-(gamma(1)delta(1))(8). [4Fe-4S] cluster is required as a cofactor. Requires [Ni-4Fe-4S] cluster as cofactor.

The catalysed reaction is CO + 2 oxidized [2Fe-2S]-[ferredoxin] + H2O = 2 reduced [2Fe-2S]-[ferredoxin] + CO2 + 2 H(+). Its pathway is one-carbon metabolism; methanogenesis from acetate. Part of the ACDS complex that catalyzes the reversible cleavage of acetyl-CoA, allowing growth on acetate as sole source of carbon and energy. The alpha-epsilon subcomponent functions as a carbon monoxide dehydrogenase. The polypeptide is Acetyl-CoA decarbonylase/synthase complex subunit alpha 1 (Methanosarcina thermophila).